We begin with the raw amino-acid sequence, 915 residues long: Probable inorganic carbon transporter subunit DabA (915 aa).

4 residues coordinate Zn(2+): cysteine 392, aspartate 394, histidine 566, and cysteine 581.

This sequence belongs to the inorganic carbon transporter (TC 9.A.2) DabA family. As to quaternary structure, forms a complex with DabB. Requires Zn(2+) as cofactor.

It is found in the cell inner membrane. In terms of biological role, part of an energy-coupled inorganic carbon pump. The sequence is that of Probable inorganic carbon transporter subunit DabA from Nitrosospira multiformis (strain ATCC 25196 / NCIMB 11849 / C 71).